We begin with the raw amino-acid sequence, 58 residues long: uncharacterized protein (58 aa).

This is an uncharacterized protein from Bacillus anthracis.